A 212-amino-acid polypeptide reads, in one-letter code: WAP four-disulfide core domain protein 1 (212 aa).

Residues 1–26 (MGSCDRKALWALSFLLLLLGSSSVQG) form the signal peptide. Positions 43–62 (EEVAATGSRQPHADRCPPPP) are disordered. The 50-residue stretch at 51 to 100 (RQPHADRCPPPPRTLPPGACQATRCQSDSECPRHRRCCYNGCAYACLEAV) folds into the WAP domain. Disulfide bonds link cysteine 58-cysteine 88, cysteine 70-cysteine 92, cysteine 75-cysteine 87, and cysteine 81-cysteine 96. A disordered region spans residues 191–212 (EYPEGDSKYVAEPGKGQQRHFP).

As to expression, vascular smooth muscle and prostate. Periacinar ring.

It is found in the secreted. Has growth inhibitory activity. The sequence is that of WAP four-disulfide core domain protein 1 (Wfdc1) from Rattus norvegicus (Rat).